Here is a 451-residue protein sequence, read N- to C-terminus: Chromosomal replication initiator protein DnaA (451 aa).

Positions 1–77 (MTENEQIFWN…EVYNAQISVD (77 aa)) are domain I, interacts with DnaA modulators. A domain II region spans residues 77-110 (DYVFEEDLMIEQNQTKINQKPKQQALNSLPTVTS). The domain III, AAA+ region stretch occupies residues 111 to 329 (DLNSKYSFEN…GALKDISLGA (219 aa)). The ATP site is built by Gly155, Gly157, Lys158, and Thr159. The tract at residues 330–451 (NFKQIDTITV…EIETIKNKIK (122 aa)) is domain IV, binds dsDNA.

This sequence belongs to the DnaA family. Oligomerizes as a right-handed, spiral filament on DNA at oriC.

It is found in the cytoplasm. Functionally, plays an essential role in the initiation and regulation of chromosomal replication. ATP-DnaA binds to the origin of replication (oriC) to initiate formation of the DNA replication initiation complex once per cell cycle. Binds the DnaA box (a 9 base pair repeat at the origin) and separates the double-stranded (ds)DNA. Forms a right-handed helical filament on oriC DNA; dsDNA binds to the exterior of the filament while single-stranded (ss)DNA is stabiized in the filament's interior. The ATP-DnaA-oriC complex binds and stabilizes one strand of the AT-rich DNA unwinding element (DUE), permitting loading of DNA polymerase. After initiation quickly degrades to an ADP-DnaA complex that is not apt for DNA replication. Binds acidic phospholipids. The sequence is that of Chromosomal replication initiator protein DnaA from Streptococcus pyogenes serotype M49 (strain NZ131).